A 517-amino-acid chain; its full sequence is Glutamyl-tRNA(Gln) amidotransferase subunit A, mitochondrial (517 aa).

Residues K58 and S131 each act as charge relay system in the active site. Positions 106 to 132 are disordered; sequence FGMGTHSTHSAHGPVASPAGRSAGGSS. The Acyl-ester intermediate role is filled by S155.

This sequence belongs to the amidase family. GatA subfamily. As to quaternary structure, subunit of the heterotrimeric GatCAB amidotransferase (AdT) complex, composed of A, B and C subunits.

Its subcellular location is the mitochondrion. It carries out the reaction L-glutamyl-tRNA(Gln) + L-glutamine + ATP + H2O = L-glutaminyl-tRNA(Gln) + L-glutamate + ADP + phosphate + H(+). In terms of biological role, allows the formation of correctly charged Gln-tRNA(Gln) through the transamidation of misacylated Glu-tRNA(Gln) in the mitochondria. The reaction takes place in the presence of glutamine and ATP through an activated gamma-phospho-Glu-tRNA(Gln). This Pyricularia oryzae (strain 70-15 / ATCC MYA-4617 / FGSC 8958) (Rice blast fungus) protein is Glutamyl-tRNA(Gln) amidotransferase subunit A, mitochondrial.